The sequence spans 238 residues: ATP-dependent dethiobiotin synthetase BioD (238 aa).

An ATP-binding site is contributed by 13–18; it reads EIGKTV. Mg(2+) is bound at residue threonine 17. Lysine 38 is a catalytic residue. Threonine 42 is a binding site for substrate. Residues arginine 59 and glutamate 111 each coordinate Mg(2+). ATP is bound by residues 111 to 114, 175 to 176, and 204 to 206; these read EGAG, NQ, and PLL.

This sequence belongs to the dethiobiotin synthetase family. As to quaternary structure, homodimer. It depends on Mg(2+) as a cofactor.

Its subcellular location is the cytoplasm. The catalysed reaction is (7R,8S)-7,8-diammoniononanoate + CO2 + ATP = (4R,5S)-dethiobiotin + ADP + phosphate + 3 H(+). It participates in cofactor biosynthesis; biotin biosynthesis; biotin from 7,8-diaminononanoate: step 1/2. Catalyzes a mechanistically unusual reaction, the ATP-dependent insertion of CO2 between the N7 and N8 nitrogen atoms of 7,8-diaminopelargonic acid (DAPA, also called 7,8-diammoniononanoate) to form a ureido ring. This Geobacillus kaustophilus (strain HTA426) protein is ATP-dependent dethiobiotin synthetase BioD.